Consider the following 230-residue polypeptide: CDP-diacylglycerol--inositol 3-phosphatidyltransferase (230 aa).

Residues 1–28 lie on the Cytoplasmic side of the membrane; the sequence is MPSAKSSDLSPTKTNLESTTKQKVSVQD. Residues 29 to 51 traverse the membrane as a helical segment; the sequence is IFLYIPNLIGYLRIITAIISFLC. Over 52 to 57 the chain is Lumenal; it reads MANHPV. Residues 58 to 77 form a helical membrane-spanning segment; the sequence is ATLIFYGISGFLDAFDGYAA. Asp-70 and Asp-73 together coordinate Mg(2+). The a CDP-1,2-diacyl-sn-glycerol site is built by Gly-74, Arg-78, and Thr-84. Residues 78–89 lie on the Cytoplasmic side of the membrane; sequence RKFNQGTRFGAV. The helical transmembrane segment at 90 to 110 threads the bilayer; that stretch reads LDMVTDRCATSSLIVYLGVLY. 2 residues coordinate Mg(2+): Asp-91 and Asp-95. Asp-95 acts as the Proton acceptor in catalysis. Residues 111–112 lie on the Lumenal side of the membrane; sequence PQ. A helical membrane pass occupies residues 113–133; it reads YTVFWQILVSLDLSSHYMHMY. The Cytoplasmic portion of the chain corresponds to 134–161; the sequence is AMLSAGSTSHKNVDETQSKLLSLYYNNR. A helical transmembrane segment spans residues 162–182; sequence LVLFFVCLINELFYMAVYLHY. At 183-184 the chain is on the lumenal side; it reads YK. A helical membrane pass occupies residues 185 to 205; that stretch reads FFWLGTVMLVASTPIWLFKQI. Residues 206–230 are Cytoplasmic-facing; it reads ANIIQLKNASLILARMDAHDHSKRD.

This sequence belongs to the CDP-alcohol phosphatidyltransferase class-I family. Requires Mn(2+) as cofactor. The cofactor is Mg(2+).

It localises to the endoplasmic reticulum membrane. The catalysed reaction is a CDP-1,2-diacyl-sn-glycerol + myo-inositol = a 1,2-diacyl-sn-glycero-3-phospho-(1D-myo-inositol) + CMP + H(+). Inhibited by calcium and zinc ions. Inhibited by nucleoside triphosphates and diphosphates. Catalyzes the synthesis of phosphatidylinositol (PtdIns). Required for proper membrane dynamics and cell wall integrity. This Candida albicans (strain SC5314 / ATCC MYA-2876) (Yeast) protein is CDP-diacylglycerol--inositol 3-phosphatidyltransferase.